Reading from the N-terminus, the 91-residue chain is Large ribosomal subunit protein bL31B (91 aa).

This sequence belongs to the bacterial ribosomal protein bL31 family. Type B subfamily. In terms of assembly, part of the 50S ribosomal subunit.

This Neisseria meningitidis serogroup C (strain 053442) protein is Large ribosomal subunit protein bL31B.